Reading from the N-terminus, the 188-residue chain is UPF0301 protein XCV3063 (188 aa).

Belongs to the UPF0301 (AlgH) family.

This Xanthomonas euvesicatoria pv. vesicatoria (strain 85-10) (Xanthomonas campestris pv. vesicatoria) protein is UPF0301 protein XCV3063.